The sequence spans 274 residues: 2,3,4,5-tetrahydropyridine-2,6-dicarboxylate N-succinyltransferase (274 aa).

Substrate-binding residues include Arg-107 and Asp-144.

This sequence belongs to the transferase hexapeptide repeat family. In terms of assembly, homotrimer.

Its subcellular location is the cytoplasm. It carries out the reaction (S)-2,3,4,5-tetrahydrodipicolinate + succinyl-CoA + H2O = (S)-2-succinylamino-6-oxoheptanedioate + CoA. It functions in the pathway amino-acid biosynthesis; L-lysine biosynthesis via DAP pathway; LL-2,6-diaminopimelate from (S)-tetrahydrodipicolinate (succinylase route): step 1/3. The sequence is that of 2,3,4,5-tetrahydropyridine-2,6-dicarboxylate N-succinyltransferase from Cereibacter sphaeroides (strain ATCC 17029 / ATH 2.4.9) (Rhodobacter sphaeroides).